Consider the following 74-residue polypeptide: Translation initiation factor IF-1 (74 aa).

The S1-like domain occupies 1–72; sequence MAKETEMEFE…TRGRITYRKI (72 aa).

Belongs to the IF-1 family. As to quaternary structure, component of the 30S ribosomal translation pre-initiation complex which assembles on the 30S ribosome in the order IF-2 and IF-3, IF-1 and N-formylmethionyl-tRNA(fMet); mRNA recruitment can occur at any time during PIC assembly.

It is found in the cytoplasm. Functionally, one of the essential components for the initiation of protein synthesis. Stabilizes the binding of IF-2 and IF-3 on the 30S subunit to which N-formylmethionyl-tRNA(fMet) subsequently binds. Helps modulate mRNA selection, yielding the 30S pre-initiation complex (PIC). Upon addition of the 50S ribosomal subunit IF-1, IF-2 and IF-3 are released leaving the mature 70S translation initiation complex. This is Translation initiation factor IF-1 from Mycoplasma capricolum subsp. capricolum (strain California kid / ATCC 27343 / NCTC 10154).